Consider the following 1006-residue polypeptide: E3 ubiquitin-protein ligase MIB1 (1006 aa).

Residues 6–74 form the MIB/HERC2 1 domain; it reads NNRVMVEGVG…AYDLRILDSA (69 aa). A ZZ-type zinc finger spans residues 80 to 132; that stretch reads HDGTMCDTCRQQPIIGIRWKCAECTNYDLCTVCYHGDKHHLRHRFYRITTPGS. Zn(2+) is bound by residues Cys-85, Cys-88, Cys-100, Cys-103, Cys-109, Cys-112, His-118, and His-122. The region spanning 143–221 is the MIB/HERC2 2 domain; that stretch reads SKKITARGIF…MSDLKCVQDA (79 aa). At Ser-408 the chain carries Phosphoserine. 9 ANK repeats span residues 430–460, 463–492, 496–525, 529–558, 562–591, 595–627, 631–661, 665–694, and 698–729; these read DLNE…DVNG, AGHT…DVEA, DGDR…DLNA, RRQT…HPSL, EGDT…DVTI, NGFN…IVDE, DGYT…NLDI, NQQT…KLDI, and DGDT…KVDA. 2 RING-type zinc fingers span residues 819 to 854 and 866 to 901; these read CMVC…LICK and CVVC…VQCR. Residues 935 to 962 adopt a coiled-coil conformation; the sequence is QKDKDNTNVNADVQKLQQQLQDIKEQTM. The RING-type 3 zinc finger occupies 963-996; that stretch reads CPVCLDRLKNMIFLCGHGTCQLCGDRMSECPICR.

In terms of assembly, interacts with CEP131 and PCM1. Post-translationally, ubiquitinated; possibly via autoubiquitination. Ubiquitinated; this modification is inhibited in response to cellular stress, such as ultraviolet light (UV) radiation or heat shock. In terms of tissue distribution, widely expressed at low level. Expressed at higher level in spinal cord, ovary, whole brain, and all specific brain regions examined.

The protein resides in the cytoplasm. The protein localises to the cytoskeleton. It is found in the microtubule organizing center. Its subcellular location is the centrosome. It localises to the centriolar satellite. The protein resides in the cell membrane. It catalyses the reaction S-ubiquitinyl-[E2 ubiquitin-conjugating enzyme]-L-cysteine + [acceptor protein]-L-lysine = [E2 ubiquitin-conjugating enzyme]-L-cysteine + N(6)-ubiquitinyl-[acceptor protein]-L-lysine.. The protein operates within protein modification; protein ubiquitination. E3 ubiquitin-protein ligase that mediates ubiquitination of Delta receptors, which act as ligands of Notch proteins. Positively regulates the Delta-mediated Notch signaling by ubiquitinating the intracellular domain of Delta, leading to endocytosis of Delta receptors. Probably mediates ubiquitination and subsequent proteasomal degradation of DAPK1, thereby antagonizing anti-apoptotic effects of DAPK1 to promote TNF-induced apoptosis. Involved in ubiquitination of centriolar satellite CEP131, CEP290 and PCM1 proteins and hence inhibits primary cilium formation in proliferating cells. Mediates 'Lys-63'-linked polyubiquitination of TBK1, which probably participates in kinase activation. Functionally, (Microbial infection) During adenovirus infection, mediates ubiquitination of Core-capsid bridging protein. This allows viral genome delivery into nucleus for infection. This is E3 ubiquitin-protein ligase MIB1 (MIB1) from Homo sapiens (Human).